Consider the following 332-residue polypeptide: Succinylglutamate desuccinylase (332 aa).

Residues His-59, Glu-62, and His-151 each coordinate Zn(2+). Glu-215 is a catalytic residue.

Belongs to the AspA/AstE family. Succinylglutamate desuccinylase subfamily. Requires Zn(2+) as cofactor.

The catalysed reaction is N-succinyl-L-glutamate + H2O = L-glutamate + succinate. The protein operates within amino-acid degradation; L-arginine degradation via AST pathway; L-glutamate and succinate from L-arginine: step 5/5. In terms of biological role, transforms N(2)-succinylglutamate into succinate and glutamate. In Pseudomonas paraeruginosa (strain DSM 24068 / PA7) (Pseudomonas aeruginosa (strain PA7)), this protein is Succinylglutamate desuccinylase.